Reading from the N-terminus, the 162-residue chain is Anaerobic nitrite reductase NSHB2 (162 aa).

The region spanning 16-159 (SFSEEQEALV…LVAAIKQEMK (144 aa)) is the Globin domain. The Homodimerization signature appears at 49 to 53 (EVAPS). Heme b contacts are provided by Ser59, Lys73, His77, Arg100, Thr104, and His105. The Homodimerization motif lies at 112-124 (DAHFEVTRFALLE).

This sequence belongs to the plant globin family. In terms of assembly, homodimer. Heme b is required as a cofactor. In terms of tissue distribution, mainly expressed in germinating seeds, seedlings, roots, flowers and leaves.

The protein resides in the cytoplasm. It localises to the nucleus. The catalysed reaction is Fe(III)-heme b-[protein] + nitric oxide + H2O = Fe(II)-heme b-[protein] + nitrite + 2 H(+). Its function is as follows. Phytoglobin that reduces nitrite to nitric oxide under anoxic conditions (e.g. during flooding or in waterlogged soil). May not function as an oxygen storage or transport protein. Has an unusually high affinity for O(2) through an hexacoordinate heme iron because of a very low dissociation constant. Promotes tolerance to low potassium K(+) conditions. In Oryza sativa subsp. indica (Rice), this protein is Anaerobic nitrite reductase NSHB2.